Here is a 578-residue protein sequence, read N- to C-terminus: Proline--tRNA ligase (578 aa).

It belongs to the class-II aminoacyl-tRNA synthetase family. ProS type 1 subfamily. In terms of assembly, homodimer.

It localises to the cytoplasm. The catalysed reaction is tRNA(Pro) + L-proline + ATP = L-prolyl-tRNA(Pro) + AMP + diphosphate. In terms of biological role, catalyzes the attachment of proline to tRNA(Pro) in a two-step reaction: proline is first activated by ATP to form Pro-AMP and then transferred to the acceptor end of tRNA(Pro). As ProRS can inadvertently accommodate and process non-cognate amino acids such as alanine and cysteine, to avoid such errors it has two additional distinct editing activities against alanine. One activity is designated as 'pretransfer' editing and involves the tRNA(Pro)-independent hydrolysis of activated Ala-AMP. The other activity is designated 'posttransfer' editing and involves deacylation of mischarged Ala-tRNA(Pro). The misacylated Cys-tRNA(Pro) is not edited by ProRS. The polypeptide is Proline--tRNA ligase (Burkholderia ambifaria (strain ATCC BAA-244 / DSM 16087 / CCUG 44356 / LMG 19182 / AMMD) (Burkholderia cepacia (strain AMMD))).